The primary structure comprises 614 residues: DBH-like monooxygenase protein 1 (614 aa).

The N-terminal stretch at 1–22 (MRPLRPWALLLGALLGAAAAAA) is a signal peptide. The Lumenal portion of the chain corresponds to 23–592 (RRYPHVAVLD…SSSCLPCSLS (570 aa)). The DOMON domain occupies 35 to 148 (AAYRLLWGRR…STVRVIWAYH (114 aa)). Asn114 is a glycosylation site (N-linked (GlcNAc...) asparagine). Residue Tyr203 is part of the active site. Intrachain disulfides connect Cys205–Cys257 and Cys242–Cys269. Cu cation-binding residues include His235 and His236. Asn247 carries N-linked (GlcNAc...) asparagine glycosylation. Positions 307, 389, 391, and 464 each coordinate Cu cation. 3 disulfide bridges follow: Cys364/Cys480, Cys368/Cys550, and Cys443/Cys465. The active site involves His389. Residues Asn476 and Asn517 are each glycosylated (N-linked (GlcNAc...) asparagine). The helical transmembrane segment at 593 to 613 (LTLLFVVYVASSTIGNFGPVV) threads the bilayer.

This sequence belongs to the copper type II ascorbate-dependent monooxygenase family. Cu(2+) is required as a cofactor.

The protein resides in the endoplasmic reticulum membrane. The chain is DBH-like monooxygenase protein 1 (MOXD1) from Gallus gallus (Chicken).